Reading from the N-terminus, the 178-residue chain is Cytidylate kinase (178 aa).

7–15 contacts ATP; that stretch reads GLPGTGTTT.

This sequence belongs to the cytidylate kinase family. Type 2 subfamily.

It localises to the cytoplasm. The enzyme catalyses CMP + ATP = CDP + ADP. The catalysed reaction is dCMP + ATP = dCDP + ADP. The protein is Cytidylate kinase of Methanococcus maripaludis (strain C7 / ATCC BAA-1331).